The sequence spans 205 residues: Guanylate kinase (205 aa).

Positions 7-185 (GNIFIISAAS…AEGDLLHIVN (179 aa)) constitute a Guanylate kinase-like domain. Residue 14-21 (AASGTGKT) coordinates ATP.

This sequence belongs to the guanylate kinase family.

The protein localises to the cytoplasm. The enzyme catalyses GMP + ATP = GDP + ADP. In terms of biological role, essential for recycling GMP and indirectly, cGMP. This is Guanylate kinase from Neisseria gonorrhoeae (strain ATCC 700825 / FA 1090).